The chain runs to 120 residues: Large ribosomal subunit protein uL29A (120 aa).

Phosphoserine occurs at positions 13 and 50.

It belongs to the universal ribosomal protein uL29 family. Component of the large ribosomal subunit (LSU). Mature yeast ribosomes consist of a small (40S) and a large (60S) subunit. The 40S small subunit contains 1 molecule of ribosomal RNA (18S rRNA) and 33 different proteins (encoded by 57 genes). The large 60S subunit contains 3 rRNA molecules (25S, 5.8S and 5S rRNA) and 46 different proteins (encoded by 81 genes). uL29 is associated with the polypeptide exit tunnel.

It localises to the cytoplasm. Functionally, component of the ribosome, a large ribonucleoprotein complex responsible for the synthesis of proteins in the cell. The small ribosomal subunit (SSU) binds messenger RNAs (mRNAs) and translates the encoded message by selecting cognate aminoacyl-transfer RNA (tRNA) molecules. The large subunit (LSU) contains the ribosomal catalytic site termed the peptidyl transferase center (PTC), which catalyzes the formation of peptide bonds, thereby polymerizing the amino acids delivered by tRNAs into a polypeptide chain. The nascent polypeptides leave the ribosome through a tunnel in the LSU and interact with protein factors that function in enzymatic processing, targeting, and the membrane insertion of nascent chains at the exit of the ribosomal tunnel. The sequence is that of Large ribosomal subunit protein uL29A from Saccharomyces cerevisiae (strain ATCC 204508 / S288c) (Baker's yeast).